A 388-amino-acid chain; its full sequence is Chorismate synthase (388 aa).

NADP(+) is bound by residues Arg39 and Arg45. FMN is bound by residues 130 to 132 (RSS), 251 to 252 (NA), Gly296, 311 to 315 (KPIPT), and Arg337.

Belongs to the chorismate synthase family. As to quaternary structure, homotetramer. The cofactor is FMNH2.

The catalysed reaction is 5-O-(1-carboxyvinyl)-3-phosphoshikimate = chorismate + phosphate. It functions in the pathway metabolic intermediate biosynthesis; chorismate biosynthesis; chorismate from D-erythrose 4-phosphate and phosphoenolpyruvate: step 7/7. In terms of biological role, catalyzes the anti-1,4-elimination of the C-3 phosphate and the C-6 proR hydrogen from 5-enolpyruvylshikimate-3-phosphate (EPSP) to yield chorismate, which is the branch point compound that serves as the starting substrate for the three terminal pathways of aromatic amino acid biosynthesis. This reaction introduces a second double bond into the aromatic ring system. This Streptococcus mutans serotype c (strain ATCC 700610 / UA159) protein is Chorismate synthase.